The chain runs to 158 residues: Transcription elongation factor GreA (158 aa).

This sequence belongs to the GreA/GreB family.

In terms of biological role, necessary for efficient RNA polymerase transcription elongation past template-encoded arresting sites. The arresting sites in DNA have the property of trapping a certain fraction of elongating RNA polymerases that pass through, resulting in locked ternary complexes. Cleavage of the nascent transcript by cleavage factors such as GreA or GreB allows the resumption of elongation from the new 3'terminus. GreA releases sequences of 2 to 3 nucleotides. The protein is Transcription elongation factor GreA of Ralstonia nicotianae (strain ATCC BAA-1114 / GMI1000) (Ralstonia solanacearum).